A 2450-amino-acid polypeptide reads, in one-letter code: Tetratricopeptide repeat protein 28 (2450 aa).

The residue at position 1 (Met1) is an N-acetylmethionine. A disordered region spans residues 1-36 (MEQPPPLAPEPASARSRRRREPESPPAPIPLFGART). Ser24 is modified (phosphoserine). 28 TPR repeats span residues 52–85 (FVEKVRQSNQACHDGDFHTAIVLYNEALAVDPQN), 87–119 (ILYSNRSAAYMKTQQYHKALDDAIKARLLNPKW), 120–153 (PKAYFRQGVALQYLGRHADALAAFASGLAQDPKS), 190–223 (FVVVSVVGQELLTAGHHGASVVVLEAALKIGTCS), 228–261 (GSVFSALSSAHWSLGNTEKSTGYMQQDLDVAKTL), 268–301 (CRAHGNLGSAFFSKGNYREALTNHRHQLVLAMKL), 308–341 (SSALSSLGHVYTAIGDYPNALASHKQCVLLAKQS), 348–381 (ARELGNMGAVYIAMGDFENAVQCHEQHLRIAKDL), 388–421 (ARAYSNLGSAYHYRRNFDKAMSYHNCVLELAQEL), 428–461 (MRAYAGLGHAARCMQDLERAKQYHEQQLGIAEDL), 468–501 (GRASSNLGIIHQMKGDYDTALKLHKTHLCIAQEL), 508–541 (GRAYGNMGNAYNALGMYDQAVKYHRQELQISMEV), 548–581 (ASTHGNLAVAYQALGAHDRALQHYQNHLNIAREL), 588–621 (ARALSNLGNFHCSRGEYVQAAPYYEQYLRLAPDL), 628–661 (GKVCHNLGYAHYCLGNYQEAVKYYEQDLALAKDL), 668–701 (AKAYCNLGLAFKALLNFAKAEECQKYLLSLAQSL), 708–741 (FRALGNLGDIFICKKDINGAIKFYEQQLGLSHHV), 748–781 (ASAYAALGTAYRMVQKYDKALGYHTQELEVYQEL), 788–821 (CRAHGHLAAVYMALGKYTMAFKCYQEQLELGRKL), 828–861 (AQVYGNMGITKMNMNVMEDAIGYFEQQLAMLQQL), 871–904 (GRAYGNLGDCYEALGDYEEAIKYYEQYLSVAQSL), 911–944 (AKAYRGLGNGHRATGSLQQALVCFEKRLVVAHEL), 951–984 (AQAYGELGSLHSQLGNYEQAISCLERQLNIARDM), 991–1024 (SDAACGLGGVYQQMGEYDTALQYHQLDLQIAEET), 1031–1064 (GRAYGNLGLTYESLGTFERAVVYQEQHLSIAAQM), 1071–1104 (TVSYSSLGRTHHALQNYSQAVMYLQEGLRLAEQL), 1111–1144 (AKIRHGLGLSLWASGNLEEAQHQLYRASALFETI), and 1163–1196 (TSSYQALQRVLVSLGHHDEALAVAERGRTRAFAD). The disordered stretch occupies residues 1362–1381 (SGTVSPSKDGTSSLPRRQNS). A phosphoserine mark is found at Ser1584 and Ser2098. A disordered region spans residues 2001 to 2364 (KPEGGLEGGG…GTLTSKRDVL (364 aa)). The segment covering 2090 to 2116 (SVSSKGSVSTPNSPVKMTLIPSPNSPF) has biased composition (polar residues). A compositionally biased stretch (low complexity) spans 2124-2140 (SSDTGESDQSSTETDST). Residues 2143–2153 (SQEESTPKLDP) are compositionally biased toward basic and acidic residues. A compositionally biased stretch (polar residues) spans 2191 to 2206 (APSSTTVFRASETSAF). Ser2216 is modified (phosphoserine). The segment covering 2229-2245 (ARSSSLPKVSSPATSEV) has biased composition (polar residues). Composition is skewed to low complexity over residues 2252 to 2262 (SPPGSSHPSPG) and 2296 to 2320 (SPACSAPSPALSYSSAGSARSSPAD). 2 positions are modified to phosphoserine: Ser2365 and Ser2370.

In terms of assembly, interacts with AURKB. As to expression, expressed in embryos at all stages examined. In adult tissues, detected in heart and at low levels in kidney and testis.

It localises to the cytoplasm. It is found in the cytoskeleton. Its subcellular location is the microtubule organizing center. The protein resides in the centrosome. The protein localises to the spindle. It localises to the spindle pole. It is found in the midbody. In terms of biological role, during mitosis, may be involved in the condensation of spindle midzone microtubules, leading to the formation of midbody. Its function is as follows. Essential for the formation and integrity of the midbody. Max play a critical role in the progress of mitosis and cytokinesis during cell cycle. In Mus musculus (Mouse), this protein is Tetratricopeptide repeat protein 28 (Ttc28).